We begin with the raw amino-acid sequence, 627 residues long: UvrABC system protein C (627 aa).

The GIY-YIG domain maps to 26–105; that stretch reads PEPGVYFMRD…IKQHQPYFNV (80 aa). One can recognise a UVR domain in the interval 215 to 250; the sequence is QELIDILSEQMEKAAEALNFEVAARIRDQIAGLKSL.

Belongs to the UvrC family. As to quaternary structure, interacts with UvrB in an incision complex.

It localises to the cytoplasm. Its function is as follows. The UvrABC repair system catalyzes the recognition and processing of DNA lesions. UvrC both incises the 5' and 3' sides of the lesion. The N-terminal half is responsible for the 3' incision and the C-terminal half is responsible for the 5' incision. The chain is UvrABC system protein C from Nostoc sp. (strain PCC 7120 / SAG 25.82 / UTEX 2576).